The chain runs to 91 residues: DNA-binding protein HU (91 aa).

The protein belongs to the bacterial histone-like protein family.

Functionally, histone-like DNA-binding protein which is capable of wrapping DNA to stabilize it, and thus to prevent its denaturation under extreme environmental conditions. Also seems to act as a fortuitous virulence factor in delayed sequelae by binding to heparan sulfate-proteoglycans in the extracellular matrix of target organs and acting as a nidus for in situ immune complex formation. The polypeptide is DNA-binding protein HU (hup) (Streptococcus gordonii).